We begin with the raw amino-acid sequence, 504 residues long: Probable cytosol aminopeptidase (504 aa).

Residues K272 and D277 each coordinate Mn(2+). Residue K284 is part of the active site. Mn(2+)-binding residues include D295, D354, and E356. Residue R358 is part of the active site.

It belongs to the peptidase M17 family. Mn(2+) serves as cofactor.

The protein localises to the cytoplasm. It catalyses the reaction Release of an N-terminal amino acid, Xaa-|-Yaa-, in which Xaa is preferably Leu, but may be other amino acids including Pro although not Arg or Lys, and Yaa may be Pro. Amino acid amides and methyl esters are also readily hydrolyzed, but rates on arylamides are exceedingly low.. The enzyme catalyses Release of an N-terminal amino acid, preferentially leucine, but not glutamic or aspartic acids.. Functionally, presumably involved in the processing and regular turnover of intracellular proteins. Catalyzes the removal of unsubstituted N-terminal amino acids from various peptides. This is Probable cytosol aminopeptidase from Chlorobaculum tepidum (strain ATCC 49652 / DSM 12025 / NBRC 103806 / TLS) (Chlorobium tepidum).